Consider the following 289-residue polypeptide: Palmitoyl-protein thioesterase 3 (289 aa).

Positions 1–20 are cleaved as a signal peptide; the sequence is MRILSSLILLIALAIALVSA. Serine 97 is a catalytic residue. Residues asparagine 189 and asparagine 195 are each glycosylated (N-linked (GlcNAc...) asparagine). Catalysis depends on residues aspartate 210 and histidine 266. Asparagine 281 is a glycosylation site (N-linked (GlcNAc...) asparagine).

It belongs to the palmitoyl-protein thioesterase family.

The protein localises to the lysosome. The enzyme catalyses S-hexadecanoyl-L-cysteinyl-[protein] + H2O = L-cysteinyl-[protein] + hexadecanoate + H(+). In terms of biological role, removes thioester-linked fatty acyl groups such as palmitate from modified cysteine residues in proteins or peptides during lysosomal degradation. The protein is Palmitoyl-protein thioesterase 3 (ppt3) of Dictyostelium discoideum (Social amoeba).